A 248-amino-acid chain; its full sequence is Pulmonary surfactant-associated protein A (248 aa).

Positions 1 to 20 (MWLCPLALTLTLMAASGAAC) are cleaved as a signal peptide. The Collagen-like domain maps to 31 to 100 (GIPGTPGSHG…PGERGPPGLP (70 aa)). The tract at residues 33–100 (PGTPGSHGLP…PGERGPPGLP (68 aa)) is disordered. Residues 42–51 (PGRDGRDGVK) are compositionally biased toward basic and acidic residues. The span at 54–65 (PGPPGPMGPPGD) shows a compositional bias: pro residues. The C-type lectin domain occupies 134–247 (IGGKVFSTNG…CLYNRLTICE (114 aa)). Disulfide bonds link Cys155–Cys246 and Cys224–Cys238. An N-linked (GlcNAc...) asparagine glycan is attached at Asn207. Ca(2+)-binding residues include Glu215, Ala217, Asn234, and Asp235.

Belongs to the SFTPA family. As to quaternary structure, oligomeric complex of 6 set of homotrimers.

It localises to the secreted. Its subcellular location is the extracellular space. It is found in the extracellular matrix. The protein resides in the surface film. In terms of biological role, in presence of calcium ions, it binds to surfactant phospholipids and contributes to lower the surface tension at the air-liquid interface in the alveoli of the mammalian lung and is essential for normal respiration. Enhances the expression of MYO18A/SP-R210 on alveolar macrophages. This chain is Pulmonary surfactant-associated protein A (SFTPA1), found in Macaca mulatta (Rhesus macaque).